A 622-amino-acid chain; its full sequence is Chaperone protein HscA homolog (622 aa).

This sequence belongs to the heat shock protein 70 family.

Its function is as follows. Chaperone involved in the maturation of iron-sulfur cluster-containing proteins. Has a low intrinsic ATPase activity which is markedly stimulated by HscB. This Burkholderia multivorans (strain ATCC 17616 / 249) protein is Chaperone protein HscA homolog.